The chain runs to 70 residues: Melittin (70 aa).

An N-terminal signal peptide occupies residues 1 to 21 (MKFLVNVALVFMVVYISFIYA). Residues 22–43 (APEPEPAPEAEAEADAEADPEA) constitute a propeptide, removed by a dipeptidylpeptidase. Glycine 44 carries the post-translational modification N-formylglycine; partial. Glutamine 69 is subject to Glutamine amide.

It belongs to the melittin family. As to quaternary structure, monomer (in solution and for integration into membranes), homotetramer (in solution and potentially as a toroidal pore in membranes), and potenially homomultimer (as a toroidal pore in membranes). In terms of tissue distribution, expressed by the venom gland.

The protein localises to the secreted. The protein resides in the target cell membrane. Main toxin of bee venom with strong hemolytic activity and antimicrobial activity. It has enhancing effects on bee venom phospholipase A2 activity. This amphipathic toxin binds to negatively charged membrane surface and forms pore by inserting into lipid bilayers inducing the leakage of ions and molecules and the enhancement of permeability that ultimately leads to cell lysis. It acts as a voltage-gated pore with higher selectivity for anions over cations. The ion conductance has been shown to be voltage-dependent. Self-association of melittin in membranes is promoted by high ionic strength, but not by the presence of negatively charged lipids. In vivo, intradermal injection into healthy human volunteers produce sharp pain sensation and an inflammatory response. It produces pain by activating primary nociceptor cells directly and indirectly due to its ability to activate plasma membrane phospholipase A2 and its pore-forming activity. The chain is Melittin (MELT) from Apis cerana cerana (Oriental honeybee).